Consider the following 412-residue polypeptide: Maltoporin (412 aa).

An N-terminal signal peptide occupies residues 1 to 22 (MKKVSVIAAAVAATLAAGSAFA).

The protein belongs to the porin LamB (TC 1.B.3) family. As to quaternary structure, homotrimer formed of three 18-stranded antiparallel beta-barrels, containing three independent channels.

Its subcellular location is the cell outer membrane. It carries out the reaction beta-maltose(in) = beta-maltose(out). In terms of biological role, involved in the transport of maltose and maltodextrins. The protein is Maltoporin of Vibrio cholerae serotype O1 (strain ATCC 39315 / El Tor Inaba N16961).